The sequence spans 255 residues: Bouquet formation protein 3 (255 aa).

Helical transmembrane passes span 13 to 33, 48 to 68, 72 to 94, 99 to 116, 132 to 152, 172 to 192, 205 to 225, and 235 to 255; these read IKVS…NYHL, IPYW…LLLQ, LGYG…YYLT, IAWA…ARCF, YSVS…LNYI, SLVA…GYVI, SLFL…SILF, and VVGA…ALSL.

It is found in the endoplasmic reticulum membrane. Its subcellular location is the nucleus inner membrane. In terms of biological role, connects telomeres to the nuclear envelop (NE) during both vegetative growth and meiosis. This connection ensures clustering of telomeres to the spindle pole body (SPB) when cells enter meiotic prophase. This Schizosaccharomyces pombe (strain 972 / ATCC 24843) (Fission yeast) protein is Bouquet formation protein 3 (bqt3).